A 213-amino-acid polypeptide reads, in one-letter code: Glycerol-3-phosphate acyltransferase (213 aa).

6 consecutive transmembrane segments (helical) span residues 2–22 (ITIVLLILAYLLGSIPSGLWI), 52–74 (AGMATFVIDFFKGTLATLLPIIF), 81–100 (PLIFGLLAVIGHTFPIFAGF), 112–132 (VIFGFAPIFCLYLAIIFFGAL), 143–163 (VTASIAAVIGVLLFPLFGFIL), and 164–184 (SNYDSLFIAIILALASLIIIR).

The protein belongs to the PlsY family. Probably interacts with PlsX.

It is found in the cell membrane. It carries out the reaction an acyl phosphate + sn-glycerol 3-phosphate = a 1-acyl-sn-glycero-3-phosphate + phosphate. It participates in lipid metabolism; phospholipid metabolism. Functionally, catalyzes the transfer of an acyl group from acyl-phosphate (acyl-PO(4)) to glycerol-3-phosphate (G3P) to form lysophosphatidic acid (LPA). This enzyme utilizes acyl-phosphate as fatty acyl donor, but not acyl-CoA or acyl-ACP. The protein is Glycerol-3-phosphate acyltransferase of Streptococcus pneumoniae (strain ATCC 700669 / Spain 23F-1).